The primary structure comprises 99 residues: Turripeptide OL71 (99 aa).

In terms of processing, contains 5 disulfide bonds. In terms of tissue distribution, expressed by the venom duct.

It localises to the secreted. Functionally, acts as a neurotoxin by inhibiting an ion channel. This Iotyrris olangoensis (Sea snail) protein is Turripeptide OL71.